The primary structure comprises 156 residues: Snaclec trimecetin subunit alpha (156 aa).

The signal sequence occupies residues 1-23 (MGRFIFVSFGLLVVFLSLSGTGA). 3 disulfide bridges follow: C25/C36, C53/C150, and C125/C142. Residues 32 to 151 (FRRYCYKPFK…CGERNLFMCK (120 aa)) form the C-type lectin domain.

This sequence belongs to the snaclec family. As to quaternary structure, heterodimer of subunits alpha and beta; disulfide-linked. In terms of tissue distribution, expressed by the venom gland.

Its subcellular location is the secreted. Functionally, snaclec that induces platelet aggregation in either human platelet rich plasma (PRP) or washed platelet suspensions. It causes aggregation in a dose-dependent manner even in the absence of various platelet agonists such as ADP or von Willebrand factor (vWF). Interestingly, it does not induce aggregation in rabbit PRP. A monoclonal antibody against the platelet GPIb receptor blocks the aggregation induced by trimecetin, suggesting that it acts by binding to GPIb (GP1BA/GP1BB). The polypeptide is Snaclec trimecetin subunit alpha (Protobothrops mucrosquamatus (Taiwan habu)).